Here is a 550-residue protein sequence, read N- to C-terminus: MSSARPVRAARGTTLTARSWSTEAPLRMLQNNLDPEVAERPDDLVVYGGTGKAARNWASFDAIVRELTTLSDDETLLVQSGKPVGVLRTHEWAPRVLLANSNLVGDWANWPEFRRLDALGLMMYGQMTAGSWIYIGTQGILQGTYETFAAVAERRFGGTLAGTLTITAGLGGMGGAQPLAVTMNEGVALVVECDPERAHRRVKHGYLDEVADGLDQAIEKAEAAKAQRRAYSVAVIGNAAEVLPELLRRGVRADIVTDQTSAHDPLSYLPLGVELEDWEDYASKKPEEFTDRARDSMAKHVEAMVGFMDAGAEVFDYGNSLRGEAQLAGYGRAFDYPGFVPAYIRPLFCEGKGPFRWAALSGDPADIAATDRAILDLFGDDDHLARWIRLAGEKVSFQGLPARICWLGYGERHLAGLRFNEMVASGELKAPLVLGRDHLDCGSVASPYRETEGMADGSDAIADWPLLNALVNTASGATWVSLHHGGGVGMGRSLHAGQVTVADGTALAAQKLERVLTNDPGMGVIRHVDAGYDRAREVATERGVRVPGLA.

Residues Gly48–Gly49, Gln126, Gly172–Gly174, Glu192, Arg197, Asn238–Ala239, Gln259–His263, Tyr268–Leu269, and Tyr317 contribute to the NAD(+) site. Residue Cys405 is part of the active site. Residue Gly487 coordinates NAD(+).

The protein belongs to the urocanase family. NAD(+) is required as a cofactor.

The protein localises to the cytoplasm. The enzyme catalyses 4-imidazolone-5-propanoate = trans-urocanate + H2O. It participates in amino-acid degradation; L-histidine degradation into L-glutamate; N-formimidoyl-L-glutamate from L-histidine: step 2/3. In terms of biological role, catalyzes the conversion of urocanate to 4-imidazolone-5-propionate. The sequence is that of Urocanate hydratase from Saccharopolyspora erythraea (strain ATCC 11635 / DSM 40517 / JCM 4748 / NBRC 13426 / NCIMB 8594 / NRRL 2338).